A 110-amino-acid polypeptide reads, in one-letter code: DNA-directed RNA polymerase subunit omega (110 aa).

The protein belongs to the RNA polymerase subunit omega family. In terms of assembly, the RNAP catalytic core consists of 2 alpha, 1 beta, 1 beta' and 1 omega subunit. When a sigma factor is associated with the core the holoenzyme is formed, which can initiate transcription.

The catalysed reaction is RNA(n) + a ribonucleoside 5'-triphosphate = RNA(n+1) + diphosphate. Functionally, promotes RNA polymerase assembly. Latches the N- and C-terminal regions of the beta' subunit thereby facilitating its interaction with the beta and alpha subunits. The polypeptide is DNA-directed RNA polymerase subunit omega (Vesicomyosocius okutanii subsp. Calyptogena okutanii (strain HA)).